Reading from the N-terminus, the 351-residue chain is Beta-hexosaminidase (351 aa).

Substrate-binding positions include D62, R70, R133, and 163 to 164; that span reads KH. The Proton donor/acceptor role is filled by H176. The active-site Nucleophile is D248.

It belongs to the glycosyl hydrolase 3 family. NagZ subfamily. As to quaternary structure, monomer.

The protein localises to the cytoplasm. It catalyses the reaction Hydrolysis of terminal non-reducing N-acetyl-D-hexosamine residues in N-acetyl-beta-D-hexosaminides.. Its pathway is cell wall biogenesis; peptidoglycan recycling. Functionally, plays a role in peptidoglycan recycling by cleaving the terminal beta-1,4-linked N-acetylglucosamine (GlcNAc) from peptide-linked peptidoglycan fragments, giving rise to free GlcNAc, anhydro-N-acetylmuramic acid and anhydro-N-acetylmuramic acid-linked peptides. This Haemophilus influenzae (strain ATCC 51907 / DSM 11121 / KW20 / Rd) protein is Beta-hexosaminidase.